Here is a 508-residue protein sequence, read N- to C-terminus: Histidine ammonia-lyase (508 aa).

A cross-link (5-imidazolinone (Ala-Gly)) is located at residues 143-145; that stretch reads ASG. Ser144 is subject to 2,3-didehydroalanine (Ser).

It belongs to the PAL/histidase family. Post-translationally, contains an active site 4-methylidene-imidazol-5-one (MIO), which is formed autocatalytically by cyclization and dehydration of residues Ala-Ser-Gly.

It is found in the cytoplasm. It catalyses the reaction L-histidine = trans-urocanate + NH4(+). It functions in the pathway amino-acid degradation; L-histidine degradation into L-glutamate; N-formimidoyl-L-glutamate from L-histidine: step 1/3. The polypeptide is Histidine ammonia-lyase (Anaeromyxobacter sp. (strain K)).